We begin with the raw amino-acid sequence, 358 residues long: Phospho-N-acetylmuramoyl-pentapeptide-transferase (358 aa).

The next 10 membrane-spanning stretches (helical) occupy residues 27 to 47 (IYAM…VIRV), 73 to 93 (TMGG…WADL), 97 to 117 (YIWT…VDDY), 134 to 154 (MFWQ…KPGF), 170 to 190 (LWFW…NAVN), 197 to 217 (GLAI…SYVA), 233 to 253 (GAGE…GFLW), 261 to 281 (VFMG…IAVI), 286 to 306 (ILLV…IFQV), and 335 to 355 (KIIV…ISTL).

The protein belongs to the glycosyltransferase 4 family. MraY subfamily. It depends on Mg(2+) as a cofactor.

Its subcellular location is the cell inner membrane. It catalyses the reaction UDP-N-acetyl-alpha-D-muramoyl-L-alanyl-gamma-D-glutamyl-meso-2,6-diaminopimeloyl-D-alanyl-D-alanine + di-trans,octa-cis-undecaprenyl phosphate = di-trans,octa-cis-undecaprenyl diphospho-N-acetyl-alpha-D-muramoyl-L-alanyl-D-glutamyl-meso-2,6-diaminopimeloyl-D-alanyl-D-alanine + UMP. It functions in the pathway cell wall biogenesis; peptidoglycan biosynthesis. Functionally, catalyzes the initial step of the lipid cycle reactions in the biosynthesis of the cell wall peptidoglycan: transfers peptidoglycan precursor phospho-MurNAc-pentapeptide from UDP-MurNAc-pentapeptide onto the lipid carrier undecaprenyl phosphate, yielding undecaprenyl-pyrophosphoryl-MurNAc-pentapeptide, known as lipid I. This chain is Phospho-N-acetylmuramoyl-pentapeptide-transferase, found in Pelobacter propionicus (strain DSM 2379 / NBRC 103807 / OttBd1).